The sequence spans 216 residues: Peptide methionine sulfoxide reductase MsrA (216 aa).

Cys54 is an active-site residue.

It belongs to the MsrA Met sulfoxide reductase family.

It carries out the reaction L-methionyl-[protein] + [thioredoxin]-disulfide + H2O = L-methionyl-(S)-S-oxide-[protein] + [thioredoxin]-dithiol. It catalyses the reaction [thioredoxin]-disulfide + L-methionine + H2O = L-methionine (S)-S-oxide + [thioredoxin]-dithiol. Functionally, has an important function as a repair enzyme for proteins that have been inactivated by oxidation. Catalyzes the reversible oxidation-reduction of methionine sulfoxide in proteins to methionine. The protein is Peptide methionine sulfoxide reductase MsrA of Xylella fastidiosa (strain Temecula1 / ATCC 700964).